The chain runs to 226 residues: MHSRKICVSLGQPTMPQALEASLRIFGADVIEVRLDYIDVPEIDPFVESLATDLLFTCRPTWEGGLFAGTEEDRLALLAEAVRAGAAYIDLELRSAEESHQYLRTYLAERETELILSYHDFESTATLAKLTGIIDQMQDAGADIGKLITTANSAADVVRVFQVLEYAAKKGLPLIAFCMGEAGAVSRVASCDLGGYMTYCCADGAEVTAAGQITISEMRGIFARYP.

Residues Ser-9, 32–34 (EVR), and Arg-59 contribute to the 3-dehydroquinate site. His-119 serves as the catalytic Proton donor/acceptor. Lys-146 (schiff-base intermediate with substrate) is an active-site residue. 3-dehydroquinate contacts are provided by Arg-187, Thr-208, and Gln-212.

Belongs to the type-I 3-dehydroquinase family. As to quaternary structure, homodimer.

It catalyses the reaction 3-dehydroquinate = 3-dehydroshikimate + H2O. It participates in metabolic intermediate biosynthesis; chorismate biosynthesis; chorismate from D-erythrose 4-phosphate and phosphoenolpyruvate: step 3/7. In terms of biological role, involved in the third step of the chorismate pathway, which leads to the biosynthesis of aromatic amino acids. Catalyzes the cis-dehydration of 3-dehydroquinate (DHQ) and introduces the first double bond of the aromatic ring to yield 3-dehydroshikimate. This is 3-dehydroquinate dehydratase from Desulfotalea psychrophila (strain LSv54 / DSM 12343).